The following is a 424-amino-acid chain: GTPase Obg (424 aa).

In terms of domain architecture, Obg spans 1–160 (MFDRVEINIK…YDLILELKLI (160 aa)). Residues 161-328 (ADVAIIGYPN…LLAKVAEKLD (168 aa)) enclose the OBG-type G domain. GTP is bound by residues 167-174 (GYPNVGKS), 192-196 (FTTLS), 213-216 (EVPG), 280-283 (NKID), and 309-311 (SAL). Residues S174 and T194 each coordinate Mg(2+). Residues 349-424 (PAPKGKMGFR…IITGRMEWYL (76 aa)) enclose the OCT domain.

It belongs to the TRAFAC class OBG-HflX-like GTPase superfamily. OBG GTPase family. Monomer. Mg(2+) is required as a cofactor.

Its subcellular location is the cytoplasm. Functionally, an essential GTPase which binds GTP, GDP and possibly (p)ppGpp with moderate affinity, with high nucleotide exchange rates and a fairly low GTP hydrolysis rate. Plays a role in control of the cell cycle, stress response, ribosome biogenesis and in those bacteria that undergo differentiation, in morphogenesis control. The protein is GTPase Obg of Dehalococcoides mccartyi (strain ATCC BAA-2100 / JCM 16839 / KCTC 5957 / BAV1).